Consider the following 375-residue polypeptide: Succinyl-diaminopimelate desuccinylase (375 aa).

Zn(2+) is bound at residue H66. D68 is an active-site residue. A Zn(2+)-binding site is contributed by D99. The active-site Proton acceptor is the E133. Zn(2+) is bound by residues E134, E162, and H348.

It belongs to the peptidase M20A family. DapE subfamily. As to quaternary structure, homodimer. Zn(2+) serves as cofactor. The cofactor is Co(2+).

It carries out the reaction N-succinyl-(2S,6S)-2,6-diaminopimelate + H2O = (2S,6S)-2,6-diaminopimelate + succinate. It functions in the pathway amino-acid biosynthesis; L-lysine biosynthesis via DAP pathway; LL-2,6-diaminopimelate from (S)-tetrahydrodipicolinate (succinylase route): step 3/3. Functionally, catalyzes the hydrolysis of N-succinyl-L,L-diaminopimelic acid (SDAP), forming succinate and LL-2,6-diaminopimelate (DAP), an intermediate involved in the bacterial biosynthesis of lysine and meso-diaminopimelic acid, an essential component of bacterial cell walls. The chain is Succinyl-diaminopimelate desuccinylase from Yersinia enterocolitica serotype O:8 / biotype 1B (strain NCTC 13174 / 8081).